The chain runs to 253 residues: 5-oxoprolinase subunit A (253 aa).

This sequence belongs to the LamB/PxpA family. As to quaternary structure, forms a complex composed of PxpA, PxpB and PxpC.

The catalysed reaction is 5-oxo-L-proline + ATP + 2 H2O = L-glutamate + ADP + phosphate + H(+). In terms of biological role, catalyzes the cleavage of 5-oxoproline to form L-glutamate coupled to the hydrolysis of ATP to ADP and inorganic phosphate. The protein is 5-oxoprolinase subunit A of Bacillus cereus (strain B4264).